Reading from the N-terminus, the 198-residue chain is Recombination protein RecR (198 aa).

A C4-type zinc finger spans residues 57 to 72; sequence CSSCGHITDKDPCYIC. A Toprim domain is found at 80 to 175; the sequence is SIICVVQDPK…KITRIAHGLP (96 aa).

Belongs to the RecR family.

Functionally, may play a role in DNA repair. It seems to be involved in an RecBC-independent recombinational process of DNA repair. It may act with RecF and RecO. This chain is Recombination protein RecR, found in Anoxybacillus flavithermus (strain DSM 21510 / WK1).